A 160-amino-acid polypeptide reads, in one-letter code: Allophycocyanin alpha chain (160 aa).

N70 carries the post-translational modification N4-methylasparagine. C80 lines the (2R,3E)-phycocyanobilin pocket.

It belongs to the phycobiliprotein family. Component of the phycobilisome. Heterodimer of an alpha and a beta chain. In terms of processing, contains one covalently linked phycocyanobilin chromophore.

It is found in the cellular thylakoid membrane. In terms of biological role, light-harvesting photosynthetic bile pigment-protein from the phycobiliprotein complex. Allophycocyanin has a maximum absorption at approximately 650 nanometers. This is Allophycocyanin alpha chain (apcA) from Anabaena cylindrica.